Here is a 387-residue protein sequence, read N- to C-terminus: Anhydro-N-acetylmuramic acid kinase (387 aa).

17 to 24 (GTSMDGVD) contacts ATP.

This sequence belongs to the anhydro-N-acetylmuramic acid kinase family.

It catalyses the reaction 1,6-anhydro-N-acetyl-beta-muramate + ATP + H2O = N-acetyl-D-muramate 6-phosphate + ADP + H(+). The protein operates within amino-sugar metabolism; 1,6-anhydro-N-acetylmuramate degradation. It participates in cell wall biogenesis; peptidoglycan recycling. Its function is as follows. Catalyzes the specific phosphorylation of 1,6-anhydro-N-acetylmuramic acid (anhMurNAc) with the simultaneous cleavage of the 1,6-anhydro ring, generating MurNAc-6-P. Is required for the utilization of anhMurNAc either imported from the medium or derived from its own cell wall murein, and thus plays a role in cell wall recycling. This is Anhydro-N-acetylmuramic acid kinase from Burkholderia mallei (strain ATCC 23344).